Consider the following 268-residue polypeptide: Tryptophan synthase alpha chain (268 aa).

Catalysis depends on proton acceptor residues Glu-49 and Asp-60.

It belongs to the TrpA family. As to quaternary structure, tetramer of two alpha and two beta chains.

It catalyses the reaction (1S,2R)-1-C-(indol-3-yl)glycerol 3-phosphate + L-serine = D-glyceraldehyde 3-phosphate + L-tryptophan + H2O. It participates in amino-acid biosynthesis; L-tryptophan biosynthesis; L-tryptophan from chorismate: step 5/5. The alpha subunit is responsible for the aldol cleavage of indoleglycerol phosphate to indole and glyceraldehyde 3-phosphate. In Vibrio vulnificus (strain CMCP6), this protein is Tryptophan synthase alpha chain.